The following is a 451-amino-acid chain: 3-phosphoshikimate 1-carboxyvinyltransferase (451 aa).

Lys-30, Ser-31, and Arg-35 together coordinate 3-phosphoshikimate. Lys-30 contributes to the phosphoenolpyruvate binding site. 2 residues coordinate phosphoenolpyruvate: Gly-101 and Arg-130. 5 residues coordinate 3-phosphoshikimate: Ser-176, Ser-177, Gln-178, Asp-321, and Lys-348. Gln-178 is a phosphoenolpyruvate binding site. Residue Asp-321 is the Proton acceptor of the active site. 2 residues coordinate phosphoenolpyruvate: Arg-352 and Gln-422.

This sequence belongs to the EPSP synthase family. In terms of assembly, monomer.

The protein resides in the cytoplasm. It carries out the reaction 3-phosphoshikimate + phosphoenolpyruvate = 5-O-(1-carboxyvinyl)-3-phosphoshikimate + phosphate. It functions in the pathway metabolic intermediate biosynthesis; chorismate biosynthesis; chorismate from D-erythrose 4-phosphate and phosphoenolpyruvate: step 6/7. Its function is as follows. Catalyzes the transfer of the enolpyruvyl moiety of phosphoenolpyruvate (PEP) to the 5-hydroxyl of shikimate-3-phosphate (S3P) to produce enolpyruvyl shikimate-3-phosphate and inorganic phosphate. The sequence is that of 3-phosphoshikimate 1-carboxyvinyltransferase from Burkholderia pseudomallei (strain K96243).